Here is a 196-residue protein sequence, read N- to C-terminus: Large ribosomal subunit protein uL6 (196 aa).

Belongs to the universal ribosomal protein uL6 family. In terms of assembly, part of the 50S ribosomal subunit.

Its function is as follows. This protein binds to the 23S rRNA, and is important in its secondary structure. It is located near the subunit interface in the base of the L7/L12 stalk, and near the tRNA binding site of the peptidyltransferase center. The polypeptide is Large ribosomal subunit protein uL6 (Archaeoglobus fulgidus (strain ATCC 49558 / DSM 4304 / JCM 9628 / NBRC 100126 / VC-16)).